A 177-amino-acid chain; its full sequence is Ribosome maturation factor RimM (177 aa).

The PRC barrel domain occupies 98–177; the sequence is DDGYYWKDLM…TIEVDWDPGF (80 aa).

Belongs to the RimM family. In terms of assembly, binds ribosomal protein uS19.

It localises to the cytoplasm. In terms of biological role, an accessory protein needed during the final step in the assembly of 30S ribosomal subunit, possibly for assembly of the head region. Essential for efficient processing of 16S rRNA. May be needed both before and after RbfA during the maturation of 16S rRNA. It has affinity for free ribosomal 30S subunits but not for 70S ribosomes. The chain is Ribosome maturation factor RimM from Enterobacter sp. (strain 638).